Here is a 156-residue protein sequence, read N- to C-terminus: Mitochondrial translation release factor in rescue (156 aa).

Residues 44–108 (EEELEEQFVR…LREKLEVAYK (65 aa)) are GGQ domain. The GGQ motif lies at 58-60 (GGQ). Residues 100–141 (REKLEVAYKGEESELLKMKKESMQKKQDKRRKVNENIEKKRR) are a coiled coil. 2 stretches are compositionally biased toward basic and acidic residues: residues 114-125 (LLKMKKESMQKK) and 132-156 (VNEN…DKST). Positions 114-156 (LLKMKKESMQKKQDKRRKVNENIEKKRRFKEMLNSKQEDDKST) are disordered.

Belongs to the prokaryotic/mitochondrial release factor family. Interacts (via C-terminus) with MTRES1 (via S4 domain). Associates with mitoribosomal S39 large subunit, peptidyl tRNA and nascent chain.

The protein resides in the mitochondrion. Part of a mitoribosome-associated quality control pathway that prevents aberrant translation by responding to interruptions during elongation. As heterodimer with MTRES1, ejects the unfinished nascent chain and peptidyl transfer RNA (tRNA), respectively, from stalled ribosomes. Recruitment of mitoribosome biogenesis factors to these quality control intermediates suggests additional roles for MTRES1 and MTRF during mitoribosome rescue. This chain is Mitochondrial translation release factor in rescue (mtrfr), found in Danio rerio (Zebrafish).